The chain runs to 283 residues: Bifunctional protein FolD (283 aa).

NADP(+) is bound by residues 165 to 167 (GRS), Ser190, and Val231.

The protein belongs to the tetrahydrofolate dehydrogenase/cyclohydrolase family. As to quaternary structure, homodimer.

The enzyme catalyses (6R)-5,10-methylene-5,6,7,8-tetrahydrofolate + NADP(+) = (6R)-5,10-methenyltetrahydrofolate + NADPH. It carries out the reaction (6R)-5,10-methenyltetrahydrofolate + H2O = (6R)-10-formyltetrahydrofolate + H(+). It functions in the pathway one-carbon metabolism; tetrahydrofolate interconversion. Functionally, catalyzes the oxidation of 5,10-methylenetetrahydrofolate to 5,10-methenyltetrahydrofolate and then the hydrolysis of 5,10-methenyltetrahydrofolate to 10-formyltetrahydrofolate. In Anoxybacillus flavithermus (strain DSM 21510 / WK1), this protein is Bifunctional protein FolD.